The sequence spans 301 residues: Sulfate adenylyltransferase subunit 2 (301 aa).

Belongs to the PAPS reductase family. CysD subfamily. Heterodimer composed of CysD, the smaller subunit, and CysN.

It carries out the reaction sulfate + ATP + H(+) = adenosine 5'-phosphosulfate + diphosphate. It participates in sulfur metabolism; hydrogen sulfide biosynthesis; sulfite from sulfate: step 1/3. Functionally, with CysN forms the ATP sulfurylase (ATPS) that catalyzes the adenylation of sulfate producing adenosine 5'-phosphosulfate (APS) and diphosphate, the first enzymatic step in sulfur assimilation pathway. APS synthesis involves the formation of a high-energy phosphoric-sulfuric acid anhydride bond driven by GTP hydrolysis by CysN coupled to ATP hydrolysis by CysD. This is Sulfate adenylyltransferase subunit 2 from Geobacter metallireducens (strain ATCC 53774 / DSM 7210 / GS-15).